The sequence spans 385 residues: Chaperone protein DnaJ (385 aa).

In terms of domain architecture, J spans 5 to 70 (DYYEVLGVAK…QKRAAYDRYG (66 aa)). The CR-type zinc finger occupies 145–223 (GFDTEIRVPS…CDGVGRTRRN (79 aa)). Residues Cys158, Cys161, Cys175, Cys178, Cys197, Cys200, Cys211, and Cys214 each coordinate Zn(2+). CXXCXGXG motif repeat units lie at residues 158 to 165 (CDTCHGSG), 175 to 182 (CRTCGGSG), 197 to 204 (CPTCHGTG), and 211 to 218 (CPSCDGVG).

The protein belongs to the DnaJ family. In terms of assembly, homodimer. Zn(2+) serves as cofactor.

Its subcellular location is the cytoplasm. Functionally, participates actively in the response to hyperosmotic and heat shock by preventing the aggregation of stress-denatured proteins and by disaggregating proteins, also in an autonomous, DnaK-independent fashion. Unfolded proteins bind initially to DnaJ; upon interaction with the DnaJ-bound protein, DnaK hydrolyzes its bound ATP, resulting in the formation of a stable complex. GrpE releases ADP from DnaK; ATP binding to DnaK triggers the release of the substrate protein, thus completing the reaction cycle. Several rounds of ATP-dependent interactions between DnaJ, DnaK and GrpE are required for fully efficient folding. Also involved, together with DnaK and GrpE, in the DNA replication of plasmids through activation of initiation proteins. The protein is Chaperone protein DnaJ of Bordetella pertussis (strain Tohama I / ATCC BAA-589 / NCTC 13251).